A 769-amino-acid polypeptide reads, in one-letter code: Amino-acid acetyltransferase, mitochondrial (769 aa).

The tract at residues 150-172 is disordered; it reads LKASPAKSGQEPTESPKESISAS. The segment covering 159–172 has biased composition (polar residues); that stretch reads QEPTESPKESISAS. Residues 590–759 enclose the N-acetyltransferase domain; that stretch reads MQPRLGLNDP…YEAVCRSIQP (170 aa).

The protein belongs to the acetyltransferase family.

Its subcellular location is the mitochondrion. The catalysed reaction is L-glutamate + acetyl-CoA = N-acetyl-L-glutamate + CoA + H(+). It participates in amino-acid biosynthesis; L-arginine biosynthesis; N(2)-acetyl-L-ornithine from L-glutamate: step 1/4. Its function is as follows. N-acetylglutamate synthase involved in arginine biosynthesis. The sequence is that of Amino-acid acetyltransferase, mitochondrial (arg2) from Penicillium rubens (strain ATCC 28089 / DSM 1075 / NRRL 1951 / Wisconsin 54-1255) (Penicillium chrysogenum).